Consider the following 411-residue polypeptide: Peptidase T (411 aa).

Residue His78 coordinates Zn(2+). The active site involves Asp80. Asp140 is a Zn(2+) binding site. Glu173 acts as the Proton acceptor in catalysis. The Zn(2+) site is built by Glu174, Asp196, and His379.

It belongs to the peptidase M20B family. It depends on Zn(2+) as a cofactor.

It localises to the cytoplasm. The enzyme catalyses Release of the N-terminal residue from a tripeptide.. In terms of biological role, cleaves the N-terminal amino acid of tripeptides. The chain is Peptidase T from Yersinia pseudotuberculosis serotype O:3 (strain YPIII).